Consider the following 750-residue polypeptide: Cellulose synthase-like protein H1 (750 aa).

A run of 2 helical transmembrane segments spans residues 27–47 (LAILFLLLALLLHRVLHDSGA) and 52–72 (AALACEAWFTFMWLLNVNAKW). Active-site residues include Asp-137 and Asp-459. The next 6 helical transmembrane spans lie at 537 to 557 (VWPVRAPFELCYALLGPYCLL), 570 to 590 (GFYIALALFIAYNTYMFMEFI), 608 to 628 (ITSASAWLLAFLTVILKTLGF), 664 to 684 (VFIPVTALAMLSVIAIAVGAW), 697 to 717 (GPGISEFISCGWLVLCFMPLL), and 727 to 747 (GIPWSIKMKACLLVAIFLLFC).

The protein belongs to the glycosyltransferase 2 family. Plant cellulose synthase-like H subfamily.

The protein localises to the golgi apparatus membrane. Thought to be a Golgi-localized beta-glycan synthase that polymerize the backbones of noncellulosic polysaccharides (hemicelluloses) of plant cell wall. This Oryza sativa subsp. japonica (Rice) protein is Cellulose synthase-like protein H1 (CSLH1).